We begin with the raw amino-acid sequence, 681 residues long: Protein hook (681 aa).

Residues Asn-6–Ala-123 enclose the Calponin-homology (CH) domain. Coiled coils occupy residues Glu-135–Gly-439 and Gln-482–Lys-584.

Belongs to the hook family. In terms of assembly, homodimer. Interacts with microtubules via its N-terminus.

It is found in the cytoplasm. Its subcellular location is the cytoskeleton. The protein localises to the endosome. The protein resides in the synapse. Its function is as follows. Involved in endocytic trafficking by stabilizing organelles of the endocytic pathway. Probably acts as a cytoskeletal linker protein required to tether endosome vesicles to the cytoskeleton. Involved in modulation of endocytosis at stages required for down-regulation of membrane proteins that control synapse size. Not involved in synaptic vesicle recycling. Required in R7 cells for boss endocytosis into multivesicular bodies (MVBs). Has a role in regulating adult longevity. The protein is Protein hook of Drosophila ananassae (Fruit fly).